We begin with the raw amino-acid sequence, 221 residues long: Kynurenine formamidase (221 aa).

Position 30 (Phe30) interacts with substrate. 3 residues coordinate Zn(2+): His60, His64, and Asp66. His70 serves as the catalytic Proton donor/acceptor. Zn(2+) is bound by residues His172 and Glu184.

Belongs to the Cyclase 1 superfamily. KynB family. In terms of assembly, homodimer. The cofactor is Zn(2+).

It catalyses the reaction N-formyl-L-kynurenine + H2O = L-kynurenine + formate + H(+). Its pathway is amino-acid degradation; L-tryptophan degradation via kynurenine pathway; L-kynurenine from L-tryptophan: step 2/2. In terms of biological role, catalyzes the hydrolysis of N-formyl-L-kynurenine to L-kynurenine, the second step in the kynurenine pathway of tryptophan degradation. This Polaromonas sp. (strain JS666 / ATCC BAA-500) protein is Kynurenine formamidase.